Here is a 463-residue protein sequence, read N- to C-terminus: tRNA modification GTPase MnmE (463 aa).

Arg26, Glu88, and Arg127 together coordinate (6S)-5-formyl-5,6,7,8-tetrahydrofolate. The 160-residue stretch at 224-383 (GLATAIIGRP…LEQRIAKMFF (160 aa)) folds into the TrmE-type G domain. Asn234 serves as a coordination point for K(+). GTP contacts are provided by residues 234-239 (NVGKSS), 253-259 (TDVAGTT), and 278-281 (DTAG). Residue Ser238 coordinates Mg(2+). K(+) contacts are provided by Thr253, Val255, and Thr258. A Mg(2+)-binding site is contributed by Thr259. (6S)-5-formyl-5,6,7,8-tetrahydrofolate is bound at residue Lys463.

The protein belongs to the TRAFAC class TrmE-Era-EngA-EngB-Septin-like GTPase superfamily. TrmE GTPase family. As to quaternary structure, homodimer. Heterotetramer of two MnmE and two MnmG subunits. K(+) serves as cofactor.

It localises to the cytoplasm. Exhibits a very high intrinsic GTPase hydrolysis rate. Involved in the addition of a carboxymethylaminomethyl (cmnm) group at the wobble position (U34) of certain tRNAs, forming tRNA-cmnm(5)s(2)U34. This Lactiplantibacillus plantarum (strain ATCC BAA-793 / NCIMB 8826 / WCFS1) (Lactobacillus plantarum) protein is tRNA modification GTPase MnmE.